We begin with the raw amino-acid sequence, 419 residues long: Histidine--tRNA ligase (419 aa).

It belongs to the class-II aminoacyl-tRNA synthetase family. Homodimer.

It is found in the cytoplasm. It carries out the reaction tRNA(His) + L-histidine + ATP = L-histidyl-tRNA(His) + AMP + diphosphate + H(+). The chain is Histidine--tRNA ligase from Methylobacillus flagellatus (strain ATCC 51484 / DSM 6875 / VKM B-1610 / KT).